The following is a 188-amino-acid chain: GMP synthase [glutamine-hydrolyzing] subunit A (188 aa).

The Glutamine amidotransferase type-1 domain occupies 1 to 188 (MIVILNNGGQ…FCKVCGLLGE (188 aa)). C76 functions as the Nucleophile in the catalytic mechanism. Residues H163 and E165 contribute to the active site.

In terms of assembly, heterodimer composed of a glutamine amidotransferase subunit (A) and a GMP-binding subunit (B).

The catalysed reaction is XMP + L-glutamine + ATP + H2O = GMP + L-glutamate + AMP + diphosphate + 2 H(+). It functions in the pathway purine metabolism; GMP biosynthesis; GMP from XMP (L-Gln route): step 1/1. Its function is as follows. Catalyzes the synthesis of GMP from XMP. The chain is GMP synthase [glutamine-hydrolyzing] subunit A from Methanococcus aeolicus (strain ATCC BAA-1280 / DSM 17508 / OCM 812 / Nankai-3).